Here is a 751-residue protein sequence, read N- to C-terminus: Cytosolic neutral trehalase (751 aa).

Over residues 1–15 the composition is skewed to polar residues; sequence MDDSALPSNTSNGIN. Disordered stretches follow at residues 1–42 and 64–88; these read MDDS…NPES and DFHEMLGDRNTRRGSMDPTSGNPRK. Basic and acidic residues predominate over residues 64–78; the sequence is DFHEMLGDRNTRRGS. The Ca(2+) site is built by Asp105, Asp107, Asn109, Gln111, and Asp116. Residues Arg292, 299 to 300, Asn336, 345 to 347, Glu412, Arg461, and Gly464 contribute to the substrate site; these read WD and RSQ. Active-site proton donor/acceptor residues include Asp466 and Glu670.

This sequence belongs to the glycosyl hydrolase 37 family. Ca(2+) is required as a cofactor.

It localises to the cytoplasm. The enzyme catalyses alpha,alpha-trehalose + H2O = alpha-D-glucose + beta-D-glucose. It functions in the pathway carbohydrate degradation. Its activity is regulated as follows. Activated by calcium. Its function is as follows. Hydrolyzes intracellular trehalose to glucose. The disaccharide trehalose serves as a storage carbohydrate that is mobilized during conidial germination. Regulates the level of trehalose as a protectant for cell integrity during heat stress. This chain is Cytosolic neutral trehalase, found in Emericella nidulans (strain FGSC A4 / ATCC 38163 / CBS 112.46 / NRRL 194 / M139) (Aspergillus nidulans).